Consider the following 1086-residue polypeptide: Auxin response factor 19 (1086 aa).

The TF-B3 DNA-binding region spans 126 to 228 (FCKTLTASDT…QLMLGIRRAN (103 aa)). The segment covering 454 to 485 (PSKLLNFQSPNLSSANSQFNKPNTVNHISQQM) has biased composition (polar residues). 4 disordered regions span residues 454-504 (PSKL…QQQQ), 545-564 (QSPNQPTGFSQSQLQQQSML), 624-647 (LSQNPQQLQMQQQSSKPSPSQQLQ), and 659-788 (QQQS…SVFE). Residues 486 to 504 (QAQPAMVKSQQQQQQQQQQ) are compositionally biased toward low complexity. Over residues 659–697 (QQQSIPPVSSSLQPQLSALQQTQSHQLQQLLSSQNQQPL) the composition is skewed to low complexity. A compositionally biased stretch (polar residues) spans 700-710 (GNNSFPASTFM). Positions 711–724 (QPPQIQVSPQQQGQ) are enriched in low complexity. Polar residues predominate over residues 747-771 (SCSTSPSANNTGHDNVSPTNFLSRN). The span at 772 to 785 (QQQGQAASVSASDS) shows a compositional bias: low complexity. Residues 958–1051 (RTYTKVQKRG…EVQQMSLDGD (94 aa)) form the PB1 domain.

The protein belongs to the ARF family. As to quaternary structure, homodimers and heterodimers. Interacts with the auxin-responsive protein IAA1. Binds to JMJ30. Binds to ATXR2 in the nucleus.

It is found in the nucleus. Its function is as follows. Auxin response factors (ARFs) are transcriptional factors that bind specifically to the DNA sequence 5'-TGTCTC-3' found in the auxin-responsive promoter elements (AuxREs). Could act as transcriptional activator or repressor. Formation of heterodimers with Aux/IAA proteins may alter their ability to modulate early auxin response genes expression. Involved in ethylene responses. Regulates lateral root formation through direct regulation of LBD16 and/or LBD29. Functionally redundant with ARF7. Involved in cellular dedifferentiation during callus formation on callus-inducing medium (CIM) and in an ATXR2-dependent manner. This chain is Auxin response factor 19, found in Arabidopsis thaliana (Mouse-ear cress).